Reading from the N-terminus, the 229-residue chain is Cytochrome c oxidase subunit 2 (229 aa).

Over 1–26 (MANWTQLGLQDASSPLMEELIYFHDY) the chain is Mitochondrial intermembrane. Residues 27–48 (TLIILTLITILVFYGLASLLFS) form a helical membrane-spanning segment. Residues 49–62 (SNTNRFFLEGQGLE) are Mitochondrial matrix-facing. Residues 63–82 (TVWTIIPAVILIFIALPSLQ) traverse the membrane as a helical segment. Residues 83 to 229 (LLYLMDEVNN…ETWVSNFITE (147 aa)) are Mitochondrial intermembrane-facing. Cu cation contacts are provided by His-161, Cys-196, Glu-198, Cys-200, His-204, and Met-207. Glu-198 is a Mg(2+) binding site.

The protein belongs to the cytochrome c oxidase subunit 2 family. In terms of assembly, component of the cytochrome c oxidase (complex IV, CIV), a multisubunit enzyme composed of a catalytic core of 3 subunits and several supernumerary subunits. The complex exists as a monomer or a dimer and forms supercomplexes (SCs) in the inner mitochondrial membrane with ubiquinol-cytochrome c oxidoreductase (cytochrome b-c1 complex, complex III, CIII). Cu cation is required as a cofactor.

It is found in the mitochondrion inner membrane. The enzyme catalyses 4 Fe(II)-[cytochrome c] + O2 + 8 H(+)(in) = 4 Fe(III)-[cytochrome c] + 2 H2O + 4 H(+)(out). Its function is as follows. Component of the cytochrome c oxidase, the last enzyme in the mitochondrial electron transport chain which drives oxidative phosphorylation. The respiratory chain contains 3 multisubunit complexes succinate dehydrogenase (complex II, CII), ubiquinol-cytochrome c oxidoreductase (cytochrome b-c1 complex, complex III, CIII) and cytochrome c oxidase (complex IV, CIV), that cooperate to transfer electrons derived from NADH and succinate to molecular oxygen, creating an electrochemical gradient over the inner membrane that drives transmembrane transport and the ATP synthase. Cytochrome c oxidase is the component of the respiratory chain that catalyzes the reduction of oxygen to water. Electrons originating from reduced cytochrome c in the intermembrane space (IMS) are transferred via the dinuclear copper A center (CU(A)) of subunit 2 and heme A of subunit 1 to the active site in subunit 1, a binuclear center (BNC) formed by heme A3 and copper B (CU(B)). The BNC reduces molecular oxygen to 2 water molecules using 4 electrons from cytochrome c in the IMS and 4 protons from the mitochondrial matrix. In Patiria pectinifera (Starfish), this protein is Cytochrome c oxidase subunit 2 (COII).